Here is a 2170-residue protein sequence, read N- to C-terminus: Brefeldin A-inhibited guanine nucleotide-exchange protein 3 (2170 aa).

Position 471 is a phosphoserine (S471). Disordered regions lie at residues 489-547 (EHTP…MGKV) and 613-634 (AAEK…CSLA). The segment covering 503-524 (ISISVTTDTGQTTLEGELGQTT) has biased composition (polar residues). In terms of domain architecture, SEC7 spans 579 to 792 (RTRSYGSRYS…EELYHQVLDR (214 aa)). Residues 614–623 (AEKDSGRSDV) are compositionally biased toward basic and acidic residues. Residues S628, S632, and S1045 each carry the phosphoserine modification. A helical transmembrane segment spans residues 1488–1508 (PGFGIYAVVHLLLPVMSLWLL). A disordered region spans residues 1843–1872 (SSDSSQQCSSEDEDIFEETAQVSPPRGKEK). Phosphoserine is present on S1881. Polar residues predominate over residues 1938–1955 (FQSESSTPSTGGFSGKNT). Disordered regions lie at residues 1938-1997 (FQSE…RKKE) and 2024-2058 (KRRQ…PLLQ). A compositionally biased stretch (basic and acidic residues) spans 1956 to 1966 (PSEDDRREHLS). Phosphoserine is present on residues S1975 and S1984. Composition is skewed to basic and acidic residues over residues 1986 to 1997 (KTEKKDPGRKKE) and 2036 to 2045 (KEVKVDKKGE). Phosphoserine occurs at positions 2072, 2074, 2088, 2094, and 2096. The disordered stretch occupies residues 2078-2097 (ELLRQEKRPRSGSTGSSLSV). A compositionally biased stretch (low complexity) spans 2088 to 2097 (SGSTGSSLSV).

As to quaternary structure, interacts with PHB2. Expressed in pancreatic islet (insulin granules of islet alpha and beta cells) and brain (at protein level).

It localises to the cytoplasmic vesicle. Its subcellular location is the secretory vesicle. It is found in the secretory vesicle membrane. Functionally, participates in the regulation of systemic glucose homeostasis, where it negatively regulates insulin granule biogenesis in pancreatic islet beta cells. Also regulates glucagon granule production in pancreatic alpha cells. Inhibits nuclear translocation of the transcriptional coregulator PHB2 and may enhance estrogen receptor alpha (ESR1) transcriptional activity in breast cancer cells. The chain is Brefeldin A-inhibited guanine nucleotide-exchange protein 3 from Mus musculus (Mouse).